Reading from the N-terminus, the 153-residue chain is Deoxyuridine 5'-triphosphate nucleotidohydrolase (153 aa).

Residues 71-73 (RSG), Asn84, 88-90 (LID), and Met98 contribute to the substrate site.

Belongs to the dUTPase family. Mg(2+) serves as cofactor.

The enzyme catalyses dUTP + H2O = dUMP + diphosphate + H(+). Its pathway is pyrimidine metabolism; dUMP biosynthesis; dUMP from dCTP (dUTP route): step 2/2. In terms of biological role, this enzyme is involved in nucleotide metabolism: it produces dUMP, the immediate precursor of thymidine nucleotides and it decreases the intracellular concentration of dUTP so that uracil cannot be incorporated into DNA. This Hydrogenovibrio crunogenus (strain DSM 25203 / XCL-2) (Thiomicrospira crunogena) protein is Deoxyuridine 5'-triphosphate nucleotidohydrolase.